The sequence spans 542 residues: Plasminogen-binding protein PgbB (542 aa).

Residues 399 to 542 (KSASKKSQKG…RRKALEMNKK (144 aa)) are disordered. Basic and acidic residues-rich tracts occupy residues 418-435 (QERH…ENKV) and 447-456 (VKTRRPEPIR). Polar residues predominate over residues 457-467 (DQNNATQQGET). Basic and acidic residues predominate over residues 481–542 (NAAKKEVPKP…RRKALEMNKK (62 aa)).

It is found in the cell surface. Functionally, binds plasminogen, specifically, and in a concentration and lysine-dependent manner. Plasminogen is the precursor of plasmin, a serine protease that cleaves fibrin, fibronectin, laminin and vitronectin. Acquisition of plasminogen/plasmin could enable H.pylori to degrade host components. This is Plasminogen-binding protein PgbB (pgbB) from Helicobacter pylori (strain ATCC 700392 / 26695) (Campylobacter pylori).